The sequence spans 195 residues: Early light-induced protein 1, chloroplastic (195 aa).

A chloroplast-targeting transit peptide spans 1–46; that stretch reads MATASFNMQSVFAGGLTTRKINTNKLFSAGSFPNLKRNYPVGVRCM. The segment at 46–81 is disordered; sequence MAEGGPTNEDSSPAPSTSAAQPLPKSPSPPPPMKPK. Low complexity predominate over residues 56 to 68; that stretch reads SSPAPSTSAAQPL. A compositionally biased stretch (pro residues) spans 69–79; sequence PKSPSPPPPMK. The next 3 membrane-spanning stretches (helical) occupy residues 104–124, 131–151, and 175–195; these read LAMVGFVAALAVELSKGENVL, GVSWFLGTTAILTLASLVPLF, and FAMLGLVALAFTEFVKGGTLV.

It belongs to the ELIP/psbS family.

It is found in the plastid. Its subcellular location is the chloroplast thylakoid membrane. Its function is as follows. Prevents excess accumulation of free chlorophyll by inhibiting the entire chlorophyll biosynthesis pathway (e.g. 5-aminolevulinate synthesis and Mg-protoporphyrin IX chelatase activity), and hence prevent photooxidative stress. Probably involved in the integration of pigments into the mature light-harvesting pigment-protein complexes. Light-harvesting chlorophyll (LHC) a/b-binding protein required to ensure a high rate of chlorophyll accumulation during deetiolation in continuous high light. Involved in seed germination. May fulfill a photoprotective functions. In Arabidopsis thaliana (Mouse-ear cress), this protein is Early light-induced protein 1, chloroplastic.